Reading from the N-terminus, the 1202-residue chain is Liprin-alpha-1 (1202 aa).

A disordered region spans residues M1–D33. Over residues P15 to S24 the composition is skewed to gly residues. Positions S34–M141 form a coiled coil. S150 is subject to Phosphoserine. Positions E176 to K214 form a coiled coil. Disordered regions lie at residues N224–H245 and K426–R446. Residue T230 is modified to Phosphothreonine. Residues S239, S242, and S244 each carry the phosphoserine modification. Coiled-coil stretches lie at residues L249–L521 and A623–L669. S448 is modified (phosphoserine). Basic and acidic residues predominate over residues E651–S662. Residues E651–N855 are disordered. Residues S666, S668, and S693 each carry the phosphoserine modification. Positions A686–S700 are enriched in low complexity. Residues S725–I736 show a composition bias toward basic and acidic residues. Position 761 is a phosphothreonine (T761). Residues V762–R771 are compositionally biased toward basic and acidic residues. Position 763 is a phosphoserine (S763). The segment covering V832–D841 has biased composition (polar residues). Positions K847–Q871 form a coiled coil. 3 consecutive SAM domains span residues W878 to L944, N963 to L1027, and W1051 to M1120. Residues I1021–V1050 are a coiled coil. S1133 carries the post-translational modification Phosphoserine. T1159 carries the phosphothreonine modification. Residues N1163 to C1202 are disordered. The span at S1168–K1179 shows a compositional bias: low complexity. A compositionally biased stretch (polar residues) spans G1184–C1202.

It belongs to the liprin family. Liprin-alpha subfamily. In terms of assembly, homodimer. Interacts with PTPRF (via D2 domain). Part of a cortical microtubule stabilization complex (CMSC) composed of KANK1, PPFIA1, PPFIBP1, ERC1/ELKS, PHLDB2/LL5beta, CLASPs, KIF21A and possibly additional interactors; within CMSCs KANK1 and PHLDB2/LL5beta seem to be the core components for recruiting microtubule-binding proteins KIF21A and CLASPs, whereas PPFIA1, PPFIBP1 and ERC1/ELKS serve as scaffolds for protein clustering. In terms of tissue distribution, ubiquitous.

The protein localises to the cytoplasm. It localises to the cell cortex. In terms of biological role, may regulate the disassembly of focal adhesions. May localize receptor-like tyrosine phosphatases type 2A at specific sites on the plasma membrane, possibly regulating their interaction with the extracellular environment and their association with substrates. The chain is Liprin-alpha-1 (PPFIA1) from Homo sapiens (Human).